Consider the following 429-residue polypeptide: 3-phosphoshikimate 1-carboxyvinyltransferase (429 aa).

Positions 23, 24, and 28 each coordinate 3-phosphoshikimate. Lys23 contributes to the phosphoenolpyruvate binding site. Residues Gly95 and Arg123 each contribute to the phosphoenolpyruvate site. 4 residues coordinate 3-phosphoshikimate: Ser168, Gln170, Asp316, and Lys343. A phosphoenolpyruvate-binding site is contributed by Gln170. Asp316 serves as the catalytic Proton acceptor. Residues Arg347 and Arg389 each coordinate phosphoenolpyruvate.

The protein belongs to the EPSP synthase family. In terms of assembly, monomer.

The protein localises to the cytoplasm. The catalysed reaction is 3-phosphoshikimate + phosphoenolpyruvate = 5-O-(1-carboxyvinyl)-3-phosphoshikimate + phosphate. It participates in metabolic intermediate biosynthesis; chorismate biosynthesis; chorismate from D-erythrose 4-phosphate and phosphoenolpyruvate: step 6/7. Functionally, catalyzes the transfer of the enolpyruvyl moiety of phosphoenolpyruvate (PEP) to the 5-hydroxyl of shikimate-3-phosphate (S3P) to produce enolpyruvyl shikimate-3-phosphate and inorganic phosphate. This is 3-phosphoshikimate 1-carboxyvinyltransferase from Bacillus cereus (strain B4264).